Reading from the N-terminus, the 698-residue chain is ATP-dependent RNA helicase DHX33 (698 aa).

Disordered regions lie at residues 1–20 (MPEE…SCPP) and 29–50 (TAGG…AQPS). Positions 1–71 (MPEEASLPPA…RRSLPIFRAR (71 aa)) are required for nucleolar location. Residues 30–40 (AGGGGGAGGGR) are compositionally biased toward gly residues. The Helicase ATP-binding domain maps to 75 to 243 (LAQLRNLDNA…FNRAPVLYLE (169 aa)). 88-95 (GETGSGKT) contributes to the ATP binding site. The DEAH box motif lies at 185-188 (DEAH). The 171-residue stretch at 271-441 (QIHQEAPASQ…SVILQLLAMK (171 aa)) folds into the Helicase C-terminal domain. The HA2; required for interaction with EIF3G and RPL26 stretch occupies residues 462–553 (AIAQLDLLGA…ISSEGDHITL (92 aa)). Residues 536–550 (VQSVRKKFISSEGDH) carry the Critical for rDNA-binding motif.

The protein belongs to the DEAD box helicase family. DEAH subfamily. As to quaternary structure, interacts with UBTF. Interacts with DDX3X, EIF3G and EIF3H; the interaction is independent of RNA. Interacts (via HA2 region and Helicase C-terminal domain) with the components of the large ribosomal subunit RPL3, RPL7, RPL26 and RPL27. Binds to mRNA. Interacts (via the helicase C-terminal domain) with MAVS. Binds to double-stranded RNA (via the helicase C-terminal domain). In terms of processing, ubiquitinated, leading to its degradation by the proteasome. Deubiquitinated by USP36.

The protein localises to the nucleus. It localises to the nucleolus. It is found in the nucleoplasm. Its subcellular location is the cytoplasm. The protein resides in the inflammasome. It carries out the reaction ATP + H2O = ADP + phosphate + H(+). In terms of biological role, implicated in nucleolar organization, ribosome biogenesis, protein synthesis and cytoplasmic dsRNA sensing. Stimulates RNA polymerase I transcription of the 47S precursor rRNA. Associates with ribosomal DNA (rDNA) loci where it is involved in POLR1A recruitment. In the cytoplasm, promotes elongation-competent 80S ribosome assembly at the late stage of mRNA translation initiation. Senses cytosolic dsRNA mediating NLRP3 inflammasome formation in macrophages and type I interferon production in myeloid dendritic cells. Required for NLRP3 activation induced by viral dsRNA and bacterial RNA. In dendritic cells, required for induction of type I interferon production induced by cytoplasmic dsRNA via the activation of MAPK and NF-kappa-B signaling pathways. The chain is ATP-dependent RNA helicase DHX33 from Mus musculus (Mouse).